The chain runs to 142 residues: ATP synthase epsilon chain (142 aa).

It belongs to the ATPase epsilon chain family. As to quaternary structure, F-type ATPases have 2 components, CF(1) - the catalytic core - and CF(0) - the membrane proton channel. CF(1) has five subunits: alpha(3), beta(3), gamma(1), delta(1), epsilon(1). CF(0) has three main subunits: a, b and c.

Its subcellular location is the cell inner membrane. Functionally, produces ATP from ADP in the presence of a proton gradient across the membrane. This is ATP synthase epsilon chain from Shewanella oneidensis (strain ATCC 700550 / JCM 31522 / CIP 106686 / LMG 19005 / NCIMB 14063 / MR-1).